The primary structure comprises 337 residues: UDP-3-O-acylglucosamine N-acyltransferase (337 aa).

Histidine 238 acts as the Proton acceptor in catalysis.

It belongs to the transferase hexapeptide repeat family. LpxD subfamily. In terms of assembly, homotrimer.

It carries out the reaction a UDP-3-O-[(3R)-3-hydroxyacyl]-alpha-D-glucosamine + a (3R)-hydroxyacyl-[ACP] = a UDP-2-N,3-O-bis[(3R)-3-hydroxyacyl]-alpha-D-glucosamine + holo-[ACP] + H(+). It functions in the pathway bacterial outer membrane biogenesis; LPS lipid A biosynthesis. Functionally, catalyzes the N-acylation of UDP-3-O-acylglucosamine using 3-hydroxyacyl-ACP as the acyl donor. Is involved in the biosynthesis of lipid A, a phosphorylated glycolipid that anchors the lipopolysaccharide to the outer membrane of the cell. This Xanthomonas oryzae pv. oryzae (strain KACC10331 / KXO85) protein is UDP-3-O-acylglucosamine N-acyltransferase.